The primary structure comprises 96 residues: Co-chaperonin GroES (96 aa).

It belongs to the GroES chaperonin family. In terms of assembly, heptamer of 7 subunits arranged in a ring. Interacts with the chaperonin GroEL.

It is found in the cytoplasm. Its function is as follows. Together with the chaperonin GroEL, plays an essential role in assisting protein folding. The GroEL-GroES system forms a nano-cage that allows encapsulation of the non-native substrate proteins and provides a physical environment optimized to promote and accelerate protein folding. GroES binds to the apical surface of the GroEL ring, thereby capping the opening of the GroEL channel. This is Co-chaperonin GroES from Buchnera aphidicola subsp. Acyrthosiphon pisum (strain 5A).